Consider the following 220-residue polypeptide: Iron-sulfur cluster repair protein YtfE (220 aa).

It belongs to the RIC family. YtfE subfamily. In terms of assembly, homodimer.

It localises to the cytoplasm. Functionally, di-iron-containing protein involved in the repair of iron-sulfur clusters damaged by oxidative and nitrosative stress conditions. The polypeptide is Iron-sulfur cluster repair protein YtfE (Enterobacter sp. (strain 638)).